The following is a 262-amino-acid chain: Undecaprenyl-diphosphatase (262 aa).

The next 8 membrane-spanning stretches (helical) occupy residues 15–35 (LTEW…IILL), 38–58 (SSAA…IVAF), 91–111 (LYIL…AKYV), 114–134 (IFGS…LLYS), 149–169 (ALIV…RSGA), 189–209 (FLLS…VSPA), 219–239 (VGLL…LSII), and 242–262 (GRLH…LSLL).

Belongs to the UppP family.

The protein localises to the cell membrane. It catalyses the reaction di-trans,octa-cis-undecaprenyl diphosphate + H2O = di-trans,octa-cis-undecaprenyl phosphate + phosphate + H(+). Its function is as follows. Catalyzes the dephosphorylation of undecaprenyl diphosphate (UPP). The protein is Undecaprenyl-diphosphatase of Korarchaeum cryptofilum (strain OPF8).